The primary structure comprises 257 residues: tRNA uridine(34) hydroxylase (257 aa).

Residues 128–222 (NGRRLVMLDA…YFEQVGGEGY (95 aa)) form the Rhodanese domain. The Cysteine persulfide intermediate role is filled by C182.

It belongs to the TrhO family.

It catalyses the reaction uridine(34) in tRNA + AH2 + O2 = 5-hydroxyuridine(34) in tRNA + A + H2O. Catalyzes oxygen-dependent 5-hydroxyuridine (ho5U) modification at position 34 in tRNAs. In Xylella fastidiosa (strain M23), this protein is tRNA uridine(34) hydroxylase.